The primary structure comprises 481 residues: Glutamyl-tRNA(Gln) amidotransferase subunit A (481 aa).

Active-site charge relay system residues include K78 and S153. S177 acts as the Acyl-ester intermediate in catalysis.

The protein belongs to the amidase family. GatA subfamily. As to quaternary structure, heterotrimer of A, B and C subunits.

It carries out the reaction L-glutamyl-tRNA(Gln) + L-glutamine + ATP + H2O = L-glutaminyl-tRNA(Gln) + L-glutamate + ADP + phosphate + H(+). In terms of biological role, allows the formation of correctly charged Gln-tRNA(Gln) through the transamidation of misacylated Glu-tRNA(Gln) in organisms which lack glutaminyl-tRNA synthetase. The reaction takes place in the presence of glutamine and ATP through an activated gamma-phospho-Glu-tRNA(Gln). The chain is Glutamyl-tRNA(Gln) amidotransferase subunit A from Borreliella afzelii (strain PKo) (Borrelia afzelii).